The following is an 851-amino-acid chain: DNA mismatch repair protein MutS (851 aa).

ATP is bound at residue 614 to 621 (GPNMGGKS).

Belongs to the DNA mismatch repair MutS family.

This protein is involved in the repair of mismatches in DNA. It is possible that it carries out the mismatch recognition step. This protein has a weak ATPase activity. This chain is DNA mismatch repair protein MutS, found in Yersinia pseudotuberculosis serotype O:1b (strain IP 31758).